The sequence spans 247 residues: 4-hydroxy-tetrahydrodipicolinate reductase (247 aa).

NAD(+) is bound by residues 9 to 14 (GAAGRM), 76 to 78 (GTT), and 103 to 106 (APNF). The Proton donor/acceptor role is filled by His133. His134 provides a ligand contact to (S)-2,3,4,5-tetrahydrodipicolinate. The active-site Proton donor is the Lys137. Residue 143-144 (GT) participates in (S)-2,3,4,5-tetrahydrodipicolinate binding.

Belongs to the DapB family.

It is found in the cytoplasm. It carries out the reaction (S)-2,3,4,5-tetrahydrodipicolinate + NAD(+) + H2O = (2S,4S)-4-hydroxy-2,3,4,5-tetrahydrodipicolinate + NADH + H(+). It catalyses the reaction (S)-2,3,4,5-tetrahydrodipicolinate + NADP(+) + H2O = (2S,4S)-4-hydroxy-2,3,4,5-tetrahydrodipicolinate + NADPH + H(+). The protein operates within amino-acid biosynthesis; L-lysine biosynthesis via DAP pathway; (S)-tetrahydrodipicolinate from L-aspartate: step 4/4. Its function is as follows. Catalyzes the conversion of 4-hydroxy-tetrahydrodipicolinate (HTPA) to tetrahydrodipicolinate. This Beutenbergia cavernae (strain ATCC BAA-8 / DSM 12333 / CCUG 43141 / JCM 11478 / NBRC 16432 / NCIMB 13614 / HKI 0122) protein is 4-hydroxy-tetrahydrodipicolinate reductase.